A 522-amino-acid chain; its full sequence is MNNQYILIIDFGSQYTKLVARRMKDIGAKFIISSWEIKKKELLKKNIKGILLSGSPMSVLDDKSPYVSKDILNMKVPILGICYGMHTLVKQLGGKVERKSVREFGYASIKILKNHSNLFYDNFEVSEKNYTKRQKVWMSHEDSVINIPKGFSIIASTKNCKYAAIFNKKNKFYGVQFHPEVTHSEKGYLILNRFVKNICNYTNVIKYSLSIRKIILKIKNKVNDEKVILGLSGGIDSFTSAILIHKAIGNNLFCICIDNGLLRNDEILKIKNLIKKVGKINVIYINHKKRFLKSLNGITDPEKKRKTIGNLFFKIFQEQADILKAKWLAQGTIYPDIIESSQNNLLKKDNFIKSHHNVCPLPKGIKLKILEPLKHLFKDEVKKIAKKIGIPKEIIFRHPFPGPGLAVRIIGEIKEEYCNILRMADEIFISELKSENLYFNISQAFSVLLPIKSVAVMGDMRKYEWVISLRAIETLDFMSANWANIPYKILNNVSNRIINEVRGISRVVYDISNKPPSTIEWE.

Residues 5–204 (YILIIDFGSQ…VKNICNYTNV (200 aa)) form the Glutamine amidotransferase type-1 domain. Cys82 (nucleophile) is an active-site residue. Catalysis depends on residues His178 and Glu180. One can recognise a GMPS ATP-PPase domain in the interval 205 to 397 (IKYSLSIRKI…IGIPKEIIFR (193 aa)). An ATP-binding site is contributed by 232–238 (SGGIDSF).

Homodimer.

The catalysed reaction is XMP + L-glutamine + ATP + H2O = GMP + L-glutamate + AMP + diphosphate + 2 H(+). The protein operates within purine metabolism; GMP biosynthesis; GMP from XMP (L-Gln route): step 1/1. Catalyzes the synthesis of GMP from XMP. This Wigglesworthia glossinidia brevipalpis protein is GMP synthase [glutamine-hydrolyzing].